We begin with the raw amino-acid sequence, 817 residues long: Trehalose-phosphatase (817 aa).

The segment at 1–547 is glycosyltransferase; it reads MSVYGKIPST…LAATKTDQRI (547 aa).

This sequence in the N-terminal section; belongs to the glycosyltransferase 20 family. It in the C-terminal section; belongs to the trehalose phosphatase family. Component of the trehalose synthase complex that contains at least tps1, ntp1, and tpp1. Interacts with tps1. Interacts with ntp1. It depends on Mg(2+) as a cofactor.

It catalyses the reaction alpha,alpha-trehalose 6-phosphate + H2O = alpha,alpha-trehalose + phosphate. The protein operates within carbohydrate biosynthesis. In terms of biological role, phosphatase catalytic subunit of the trehalose synthase complex that catalyzes the production of trehalose from glucose-6-phosphate and UDP-alpha-D-glucose in a two step process. The disaccharide trehalose serves as a storage carbohydrate that is mobilized during nutrient stress and spore germination. Together with ntp1, regulates the level of trehalose as a protectant for cell integrity during thermal, osmotic, and oxidative stress. This is Trehalose-phosphatase from Schizosaccharomyces pombe (strain 972 / ATCC 24843) (Fission yeast).